The sequence spans 315 residues: Gamma-hemolysin component C (315 aa).

The first 29 residues, 1 to 29 (MLKNKILATTLSVSLLAPLANPLLENAKA), serve as a signal peptide directing secretion.

This sequence belongs to the aerolysin family. Toxicity requires sequential binding and synergistic association of a class S and a class F component which form heterooligomeric complexes. HlgC (class S) associates with HlgB (class F) thus forming an CB toxin.

Functionally, toxin that seems to act by forming pores in the membrane of the cell. Has a hemolytic and a leucotoxic activity. The polypeptide is Gamma-hemolysin component C (hlgC) (Staphylococcus aureus (strain MSSA476)).